We begin with the raw amino-acid sequence, 327 residues long: Altered inheritance rate of mitochondria protein 25 (327 aa).

It belongs to the phospholipid scramblase family.

It is found in the mitochondrion. In Saccharomyces cerevisiae (strain ATCC 204508 / S288c) (Baker's yeast), this protein is Altered inheritance rate of mitochondria protein 25 (AIM25).